The chain runs to 304 residues: Coenzyme PQQ synthesis protein B (304 aa).

The protein belongs to the PqqB family.

Its pathway is cofactor biosynthesis; pyrroloquinoline quinone biosynthesis. Functionally, may be involved in the transport of PQQ or its precursor to the periplasm. This Ectopseudomonas mendocina (strain ymp) (Pseudomonas mendocina) protein is Coenzyme PQQ synthesis protein B.